The chain runs to 396 residues: Phosphoglycerate kinase (396 aa).

Substrate contacts are provided by residues 21–23, Arg-37, 60–63, Arg-121, and Arg-154; these read DFN and HLGR. ATP is bound by residues Lys-205, Gly-296, Glu-327, and 353 to 356; that span reads GGDS.

The protein belongs to the phosphoglycerate kinase family. As to quaternary structure, monomer.

It is found in the cytoplasm. The enzyme catalyses (2R)-3-phosphoglycerate + ATP = (2R)-3-phospho-glyceroyl phosphate + ADP. The protein operates within carbohydrate degradation; glycolysis; pyruvate from D-glyceraldehyde 3-phosphate: step 2/5. The polypeptide is Phosphoglycerate kinase (Anaeromyxobacter dehalogenans (strain 2CP-C)).